The primary structure comprises 264 residues: tRNA (guanine-N(1)-)-methyltransferase (264 aa).

S-adenosyl-L-methionine contacts are provided by residues G120 and 140 to 145; that span reads IGDYVL.

This sequence belongs to the RNA methyltransferase TrmD family. Homodimer.

The protein resides in the cytoplasm. The enzyme catalyses guanosine(37) in tRNA + S-adenosyl-L-methionine = N(1)-methylguanosine(37) in tRNA + S-adenosyl-L-homocysteine + H(+). Specifically methylates guanosine-37 in various tRNAs. The protein is tRNA (guanine-N(1)-)-methyltransferase of Halorhodospira halophila (strain DSM 244 / SL1) (Ectothiorhodospira halophila (strain DSM 244 / SL1)).